The chain runs to 76 residues: Beta-defensin 121 (76 aa).

Residues 1–15 (MKLLLLLLTVTLLLA) form the signal peptide. Cystine bridges form between Cys23/Cys50, Cys30/Cys44, and Cys34/Cys51.

The protein belongs to the beta-defensin family. As to expression, abundant expression in the male reproductive tract only.

The protein localises to the secreted. Has antibacterial activity. This Homo sapiens (Human) protein is Beta-defensin 121 (DEFB121).